The chain runs to 140 residues: Large ribosomal subunit protein bL34m (140 aa).

This sequence belongs to the bacterial ribosomal protein bL34 family. Component of the mitochondrial large ribosomal subunit (mt-LSU). Mature N.crassa 74S mitochondrial ribosomes consist of a small (37S) and a large (54S) subunit. The 37S small subunit contains a 16S ribosomal RNA (16S mt-rRNA) and 32 different proteins. The 54S large subunit contains a 23S rRNA (23S mt-rRNA) and 42 different proteins.

It is found in the mitochondrion. Functionally, component of the mitochondrial ribosome (mitoribosome), a dedicated translation machinery responsible for the synthesis of mitochondrial genome-encoded proteins, including at least some of the essential transmembrane subunits of the mitochondrial respiratory chain. The mitoribosomes are attached to the mitochondrial inner membrane and translation products are cotranslationally integrated into the membrane. The chain is Large ribosomal subunit protein bL34m (mrpl34) from Neurospora crassa (strain ATCC 24698 / 74-OR23-1A / CBS 708.71 / DSM 1257 / FGSC 987).